The chain runs to 109 residues: UPF0482 protein ESA_01750 (109 aa).

The N-terminal stretch at 1–24 (MNKFLRHSLLLALLTGALSGVANA) is a signal peptide. A compositionally biased stretch (basic and acidic residues) spans 38–55 (RTRQDAAMDKEQWNDTRS). The disordered stretch occupies residues 38-63 (RTRQDAAMDKEQWNDTRSLRQKVNKR).

This sequence belongs to the UPF0482 family.

The sequence is that of UPF0482 protein ESA_01750 from Cronobacter sakazakii (strain ATCC BAA-894) (Enterobacter sakazakii).